Reading from the N-terminus, the 326-residue chain is tRNA-modifying protein YgfZ (326 aa).

Folate contacts are provided by tryptophan 27 and tryptophan 189.

The protein belongs to the tRNA-modifying YgfZ family.

It is found in the cytoplasm. Functionally, folate-binding protein involved in regulating the level of ATP-DnaA and in the modification of some tRNAs. It is probably a key factor in regulatory networks that act via tRNA modification, such as initiation of chromosomal replication. The polypeptide is tRNA-modifying protein YgfZ (Salmonella paratyphi A (strain AKU_12601)).